The primary structure comprises 564 residues: MVYSSTSSSQNRPDGEKHVEAVGSSTRIPSDELVDRGGGDTTTGKQSPRDIHGWKWATAYSAMLSTTLLFALDNTIVANIQPAIINDFGHLELLSWIGTGFALGTMFILLWGKVYGVFNIKWVYIFNIFLFEAGSALCGAAPNMAALIIGRVIAGVGGSGMYSGTLTYVSVLSNDQEKPAYLAGSTVVWGIGSVLGPVVGGAFAASSATWRWGFYVNLPIGAAFAPVYFLLFPSFDPYPSKTLAEKLRLVDWINAVIFLAGSACLTVVLTFGGVVYPFNSGTVIALWTVTGILLVAFIVLLKLHPLVAKENRLYPLHFFKQPTLINMQLQVFLSSGIILAMTYYVPLYFQFIKGDGALEAGVRLLPLIMFMVVASMVNGFLMPRYGLIPIWYIGGSSLALIGTALMYTVDDSTSNANIYGYNILIGAGTGSYIVAGFAIVQSLVPVHEIANAVGAMTIFQDLGMVLFLAISGSLFHNVAVDKVGKALPDVSHTEIANLIAGSSSKAFQALSDTEKALVIPEIASAMTTIWAFFLAAAALSVVCSFPLLKAKIGGMEKRTAITAA.

Polar residues predominate over residues 1-12; the sequence is MVYSSTSSSQNR. A disordered region spans residues 1-48; the sequence is MVYSSTSSSQNRPDGEKHVEAVGSSTRIPSDELVDRGGGDTTTGKQSP. The span at 29 to 38 shows a compositional bias: basic and acidic residues; it reads PSDELVDRGG. 14 helical membrane-spanning segments follow: residues 65-85, 91-111, 122-142, 152-172, 185-205, 212-232, 255-275, 281-301, 332-352, 362-382, 386-406, 423-443, 452-472, and 528-548; these read STTLLFALDNTIVANIQPAII, LELLSWIGTGFALGTMFILLW, WVYIFNIFLFEAGSALCGAAP, VIAGVGGSGMYSGTLTYVSVL, STVVWGIGSVLGPVVGGAFAA, WGFYVNLPIGAAFAPVYFLLF, AVIFLAGSACLTVVLTFGGVV, GTVIALWTVTGILLVAFIVLL, FLSSGIILAMTYYVPLYFQFI, VRLLPLIMFMVVASMVNGFLM, GLIPIWYIGGSSLALIGTALM, ILIGAGTGSYIVAGFAIVQSL, AVGAMTIFQDLGMVLFLAISG, and TIWAFFLAAAALSVVCSFPLL.

It belongs to the major facilitator superfamily. TCR/Tet family.

It localises to the cell membrane. In terms of biological role, efflux pump; part of the gene cluster that mediates the biosynthesis of depudecin, a highly oxidized eleven-carbon linear polyketide that acts as a histone deacetylase (HDAC) inhibitor and makes a small contribution to pathogenesis. Is presumed either to be responsible for exporting depudecin, to provide self-protection, or both. The protein is Efflux pump DEP3 of Alternaria brassicicola (Dark leaf spot agent).